A 376-amino-acid chain; its full sequence is Carbamoyl phosphate synthase small chain (376 aa).

The CPSase stretch occupies residues 1–184 (MKAILALADG…SEGYQQQTGE (184 aa)). The L-glutamine site is built by serine 45, glycine 236, and glycine 238. The Glutamine amidotransferase type-1 domain maps to 188-374 (KVVAYDFGIK…ADLMEKNRQS (187 aa)). Cysteine 263 (nucleophile) is an active-site residue. L-glutamine contacts are provided by leucine 264, glutamine 267, asparagine 305, glycine 307, and phenylalanine 308. Catalysis depends on residues histidine 347 and glutamate 349.

The protein belongs to the CarA family. Composed of two chains; the small (or glutamine) chain promotes the hydrolysis of glutamine to ammonia, which is used by the large (or ammonia) chain to synthesize carbamoyl phosphate. Tetramer of heterodimers (alpha,beta)4.

The catalysed reaction is hydrogencarbonate + L-glutamine + 2 ATP + H2O = carbamoyl phosphate + L-glutamate + 2 ADP + phosphate + 2 H(+). The enzyme catalyses L-glutamine + H2O = L-glutamate + NH4(+). It functions in the pathway amino-acid biosynthesis; L-arginine biosynthesis; carbamoyl phosphate from bicarbonate: step 1/1. The protein operates within pyrimidine metabolism; UMP biosynthesis via de novo pathway; (S)-dihydroorotate from bicarbonate: step 1/3. Functionally, small subunit of the glutamine-dependent carbamoyl phosphate synthetase (CPSase). CPSase catalyzes the formation of carbamoyl phosphate from the ammonia moiety of glutamine, carbonate, and phosphate donated by ATP, constituting the first step of 2 biosynthetic pathways, one leading to arginine and/or urea and the other to pyrimidine nucleotides. The small subunit (glutamine amidotransferase) binds and cleaves glutamine to supply the large subunit with the substrate ammonia. The sequence is that of Carbamoyl phosphate synthase small chain from Syntrophotalea carbinolica (strain DSM 2380 / NBRC 103641 / GraBd1) (Pelobacter carbinolicus).